We begin with the raw amino-acid sequence, 572 residues long: Phosphoglucomutase-1 (572 aa).

Residues threonine 23, arginine 27, 120 to 121 (SH), and lysine 133 each bind substrate. The active-site Phosphoserine intermediate is serine 120. Serine 120 contacts Mg(2+). The Mg(2+) site is built by aspartate 288, aspartate 290, and aspartate 292. Residues 292–293 (DR), threonine 356, 375–377 (EES), lysine 388, and arginine 524 contribute to the substrate site.

This sequence belongs to the phosphohexose mutase family. It depends on Mg(2+) as a cofactor.

The protein resides in the cytoplasm. It carries out the reaction alpha-D-glucose 1-phosphate = alpha-D-glucose 6-phosphate. In terms of biological role, this enzyme participates in both the breakdown and synthesis of glucose. The chain is Phosphoglucomutase-1 (pgmA) from Dictyostelium discoideum (Social amoeba).